We begin with the raw amino-acid sequence, 342 residues long: Antihemorrhagic factor cHLP-B (342 aa).

Residues 1 to 19 (MNSLVALVLLGQMIGSTLS) form the signal peptide. Cystatin fetuin-A-type domains follow at residues 20-129 (HHLQ…AKCH) and 140-253 (RNCP…SDCV). 6 cysteine pairs are disulfide-bonded: C28/C333, C85/C96, C110/C128, C142/C145, C204/C216, and C229/C252. The N-linked (GlcNAc...) asparagine glycan is linked to N95. An N-linked (GlcNAc...) asparagine glycan is attached at N203. N-linked (GlcNAc...) asparagine glycosylation is found at N281 and N292.

This sequence belongs to the fetuin family. As to quaternary structure, homodimer. As to expression, expressed by the liver.

Its subcellular location is the secreted. Its function is as follows. Potent inhibitor of hemorrhagic activity but also proteolytic activities. Inhibition occurs by formation of a non-covalent complex between this protein and the proteinases at their metalloproteinase domains. The chain is Antihemorrhagic factor cHLP-B from Gloydius brevicauda (Korean slamosa snake).